Here is a 232-residue protein sequence, read N- to C-terminus: MKIAILQFGGTNCDQDVLHVLKDVVGVDAETVWYKQEDLTGFDGVVVPGGFSYGDYLRAGAIAARTPIMNSVKKLAAEGKPVLGICNGFQILTEARVLEGALTTNEYPKFRCHWTNLRVETVDTPFTSKFRKGEVIRMPIAHMEGQFYAEEKTLAELDENEQVVFRYVDENGKVTDEANPNGSLENIAGIVNTSRNIFGLMPHPERASESILGSDDGLRVFESMVDYITENF.

Residues Lys-2 to Phe-232 enclose the Glutamine amidotransferase type-1 domain. Cys-86 functions as the Nucleophile in the catalytic mechanism. Active-site residues include His-203 and Glu-205.

In terms of assembly, part of the FGAM synthase complex composed of 1 PurL, 1 PurQ and 2 PurS subunits.

The protein localises to the cytoplasm. The enzyme catalyses N(2)-formyl-N(1)-(5-phospho-beta-D-ribosyl)glycinamide + L-glutamine + ATP + H2O = 2-formamido-N(1)-(5-O-phospho-beta-D-ribosyl)acetamidine + L-glutamate + ADP + phosphate + H(+). It carries out the reaction L-glutamine + H2O = L-glutamate + NH4(+). It participates in purine metabolism; IMP biosynthesis via de novo pathway; 5-amino-1-(5-phospho-D-ribosyl)imidazole from N(2)-formyl-N(1)-(5-phospho-D-ribosyl)glycinamide: step 1/2. Functionally, part of the phosphoribosylformylglycinamidine synthase complex involved in the purines biosynthetic pathway. Catalyzes the ATP-dependent conversion of formylglycinamide ribonucleotide (FGAR) and glutamine to yield formylglycinamidine ribonucleotide (FGAM) and glutamate. The FGAM synthase complex is composed of three subunits. PurQ produces an ammonia molecule by converting glutamine to glutamate. PurL transfers the ammonia molecule to FGAR to form FGAM in an ATP-dependent manner. PurS interacts with PurQ and PurL and is thought to assist in the transfer of the ammonia molecule from PurQ to PurL. This Methanosarcina barkeri (strain Fusaro / DSM 804) protein is Phosphoribosylformylglycinamidine synthase subunit PurQ.